A 123-amino-acid chain; its full sequence is Small ribosomal subunit protein uS12 (123 aa).

Positions 1–29 (MPTINQLIRKKRQSSASRKKSPALQKCPQ) are disordered. Residues 8–21 (IRKKRQSSASRKKS) show a composition bias toward basic residues. The residue at position 89 (D89) is a 3-methylthioaspartic acid.

This sequence belongs to the universal ribosomal protein uS12 family. Part of the 30S ribosomal subunit. Contacts proteins S8 and S17. May interact with IF1 in the 30S initiation complex.

In terms of biological role, with S4 and S5 plays an important role in translational accuracy. Its function is as follows. Interacts with and stabilizes bases of the 16S rRNA that are involved in tRNA selection in the A site and with the mRNA backbone. Located at the interface of the 30S and 50S subunits, it traverses the body of the 30S subunit contacting proteins on the other side and probably holding the rRNA structure together. The combined cluster of proteins S8, S12 and S17 appears to hold together the shoulder and platform of the 30S subunit. This is Small ribosomal subunit protein uS12 from Chlamydia abortus (strain DSM 27085 / S26/3) (Chlamydophila abortus).